Consider the following 492-residue polypeptide: Probable endopolygalacturonase D (492 aa).

The N-terminal stretch at 1-16 (MKRSALILSFLPLVFG) is a signal peptide. The cysteines at positions 151 and 166 are disulfide-linked. PbH1 repeat units follow at residues 216–238 (GTSVTITGVEGHVIDGNGAAYWD), 258–280 (MYNSRIENLYIQNWPVHCFEIES), 281–319 (TEHLTVSGLTLNNSAGDAANSKSDGDPAAHNSDGFDIKE), and 320–341 (SSYFTLENTWVHNQDDCVAVTS). N292 carries N-linked (GlcNAc...) asparagine glycosylation. D334 functions as the Proton donor in the catalytic mechanism. C336 and C352 are disulfide-bonded. H356 is a catalytic residue. PbH1 repeat units lie at residues 371 to 392 (VNGVTFSNSQVISSQNGCRIKT), 400 to 422 (VYNIRYENITLSDISDYGIDVQQ), and 434 to 478 (TNGV…SITG). 2 N-linked (GlcNAc...) asparagine glycosylation sites follow: N407 and N441. Cystine bridges form between C461-C466 and C484-C491.

This sequence belongs to the glycosyl hydrolase 28 family.

It localises to the secreted. It carries out the reaction (1,4-alpha-D-galacturonosyl)n+m + H2O = (1,4-alpha-D-galacturonosyl)n + (1,4-alpha-D-galacturonosyl)m.. Functionally, involved in maceration and soft-rotting of plant tissue. Hydrolyzes the 1,4-alpha glycosidic bonds of de-esterified pectate in the smooth region of the plant cell wall. This Aspergillus flavus (strain ATCC 200026 / FGSC A1120 / IAM 13836 / NRRL 3357 / JCM 12722 / SRRC 167) protein is Probable endopolygalacturonase D (pgaD).